The sequence spans 76 residues: Small ribosomal subunit protein bS18 (76 aa).

This sequence belongs to the bacterial ribosomal protein bS18 family. As to quaternary structure, part of the 30S ribosomal subunit. Forms a tight heterodimer with protein bS6.

Its function is as follows. Binds as a heterodimer with protein bS6 to the central domain of the 16S rRNA, where it helps stabilize the platform of the 30S subunit. In Xylella fastidiosa (strain M23), this protein is Small ribosomal subunit protein bS18.